A 349-amino-acid chain; its full sequence is Selenide, water dikinase (349 aa).

Residue C17 is part of the active site. ATP contacts are provided by residues K20 and 48 to 50; that span reads MAD. D51 is a binding site for Mg(2+). ATP is bound by residues D68, D91, and 139 to 141; that span reads GHS. D91 is a binding site for Mg(2+). A Mg(2+)-binding site is contributed by D227.

It belongs to the selenophosphate synthase 1 family. Class I subfamily. As to quaternary structure, homodimer. Requires Mg(2+) as cofactor.

It carries out the reaction hydrogenselenide + ATP + H2O = selenophosphate + AMP + phosphate + 2 H(+). Its function is as follows. Synthesizes selenophosphate from selenide and ATP. The chain is Selenide, water dikinase from Rhizobium meliloti (strain 1021) (Ensifer meliloti).